Reading from the N-terminus, the 325-residue chain is uncharacterized protein (325 aa).

The tract at residues 37-85 (EKPTYTPAKPVKKAPSVVQPRRVSRTLRSSESVHTNHGPERVFESPTPA) is disordered. Position 52 is a phosphoserine (serine 52). The span at 62–71 (TLRSSESVHT) shows a compositional bias: polar residues. The FCP1 homology domain maps to 153–311 (EDEGKKCLIL…IDLIPFLEHL (159 aa)).

This is an uncharacterized protein from Schizosaccharomyces pombe (strain 972 / ATCC 24843) (Fission yeast).